We begin with the raw amino-acid sequence, 189 residues long: Large ribosomal subunit protein uL10 (189 aa).

This sequence belongs to the universal ribosomal protein uL10 family. In terms of assembly, part of the ribosomal stalk of the 50S ribosomal subunit. The N-terminus interacts with L11 and the large rRNA to form the base of the stalk. The C-terminus forms an elongated spine to which L12 dimers bind in a sequential fashion forming a multimeric L10(L12)X complex.

Functionally, forms part of the ribosomal stalk, playing a central role in the interaction of the ribosome with GTP-bound translation factors. This chain is Large ribosomal subunit protein uL10, found in Rippkaea orientalis (strain PCC 8801 / RF-1) (Cyanothece sp. (strain PCC 8801)).